We begin with the raw amino-acid sequence, 354 residues long: MMYRVLRRALFLAPAERVHVWVFALLRAVTWAAPLRAALARLLAPRDPILASTVFGVHFPGPLGLAAGFDKNGRGLAAWGALGFGYAEVGTVTAQPQPGNPAPRLFRLPDDHALLNRMGFNNEGAGALAQRLTRGKSDIPIGVNIGKTKVTPAEEAVADYVTSARLLNSLASFVVVNVSSPNTPGLRDLQAVAALRPILAAVKAETTKPVLVKIAPDLSDSDIDEIADLAVELGLAGIVATNTTVSRDGLLTPGVADLGPGGISGRPVARRSAEVLRRLYRRVGDKLVLISVGGIETADDAWERIVSGASLLQGYTGFIYGGGLWAKHIHDGIAGRLRACGFTTLSEAVGSAVR.

Residues A67–K71 and T91 each bind FMN. A substrate-binding site is contributed by K71. Substrate is bound at residue N116–F120. 2 residues coordinate FMN: N144 and N177. N177 contributes to the substrate binding site. S180 functions as the Nucleophile in the catalytic mechanism. N182 contacts substrate. FMN-binding residues include K213 and T241. A substrate-binding site is contributed by N242–T243. FMN is bound by residues G265, G294, and Y315 to T316.

It belongs to the dihydroorotate dehydrogenase family. Type 2 subfamily. Monomer. It depends on FMN as a cofactor.

The protein localises to the cell membrane. The catalysed reaction is (S)-dihydroorotate + a quinone = orotate + a quinol. The protein operates within pyrimidine metabolism; UMP biosynthesis via de novo pathway; orotate from (S)-dihydroorotate (quinone route): step 1/1. Its function is as follows. Catalyzes the conversion of dihydroorotate to orotate with quinone as electron acceptor. The sequence is that of Dihydroorotate dehydrogenase (quinone) from Mycolicibacterium smegmatis (strain ATCC 700084 / mc(2)155) (Mycobacterium smegmatis).